Consider the following 361-residue polypeptide: Ribosomal RNA large subunit methyltransferase M (361 aa).

S-adenosyl-L-methionine-binding positions include Ser-190, 223–226 (CPGG), Asp-242, Asp-262, and Asp-280. The active-site Proton acceptor is the Lys-309.

It belongs to the class I-like SAM-binding methyltransferase superfamily. RNA methyltransferase RlmE family. RlmM subfamily. Monomer.

The protein localises to the cytoplasm. It carries out the reaction cytidine(2498) in 23S rRNA + S-adenosyl-L-methionine = 2'-O-methylcytidine(2498) in 23S rRNA + S-adenosyl-L-homocysteine + H(+). In terms of biological role, catalyzes the 2'-O-methylation at nucleotide C2498 in 23S rRNA. This is Ribosomal RNA large subunit methyltransferase M from Actinobacillus pleuropneumoniae serotype 7 (strain AP76).